The chain runs to 256 residues: F-actin-capping protein subunit alpha (256 aa).

Ser31 carries the phosphoserine modification.

Belongs to the F-actin-capping protein alpha subunit family. As to quaternary structure, component of the F-actin capping complex, composed of a heterodimer of an alpha and a beta subunit.

It localises to the cytoplasm. Its subcellular location is the cytoskeleton. It is found in the actin patch. Functionally, F-actin-capping proteins bind in a Ca(2+)-independent manner to the fast growing ends of actin filaments (barbed end) thereby blocking the exchange of subunits at these ends. Unlike other capping proteins (such as gelsolin and severin), these proteins do not sever actin filaments. Competes with formin cdc12 for attachment to the actin filaments barbed ends. Slowly replaces cdc12 on the barbed ends in preparation for filament disassembly during contractile ring constriction. The protein is F-actin-capping protein subunit alpha (acp1) of Schizosaccharomyces pombe (strain 972 / ATCC 24843) (Fission yeast).